Reading from the N-terminus, the 129-residue chain is Small ribosomal subunit protein uS11 (129 aa).

This sequence belongs to the universal ribosomal protein uS11 family. In terms of assembly, part of the 30S ribosomal subunit. Interacts with proteins S7 and S18. Binds to IF-3.

Located on the platform of the 30S subunit, it bridges several disparate RNA helices of the 16S rRNA. Forms part of the Shine-Dalgarno cleft in the 70S ribosome. This is Small ribosomal subunit protein uS11 from Hamiltonella defensa subsp. Acyrthosiphon pisum (strain 5AT).